A 131-amino-acid polypeptide reads, in one-letter code: Secreted RxLR effector protein 45 (131 aa).

A signal peptide spans 1 to 16 (MSIFIFISLVLGLAHQ). A RxLR motif is present at residues 56 to 59 (RPLR). Asn-128 carries N-linked (GlcNAc...) asparagine glycosylation.

The protein belongs to the RxLR effector family.

The protein localises to the secreted. The protein resides in the host nucleus. Its function is as follows. Secreted effector that completely suppresses the host cell death induced by cell death-inducing proteins. This chain is Secreted RxLR effector protein 45, found in Plasmopara viticola (Downy mildew of grapevine).